We begin with the raw amino-acid sequence, 333 residues long: Probable tRNA pseudouridine synthase B (333 aa).

Catalysis depends on Asp71, which acts as the Nucleophile. In terms of domain architecture, PUA spans 238–313 (LPKIWVRDSA…LVARTDRVVM (76 aa)).

Belongs to the pseudouridine synthase TruB family. Type 2 subfamily.

The catalysed reaction is uridine(55) in tRNA = pseudouridine(55) in tRNA. Its function is as follows. Could be responsible for synthesis of pseudouridine from uracil-55 in the psi GC loop of transfer RNAs. The sequence is that of Probable tRNA pseudouridine synthase B from Pyrobaculum calidifontis (strain DSM 21063 / JCM 11548 / VA1).